The primary structure comprises 360 residues: Phosphoserine aminotransferase (360 aa).

Arg-41 contributes to the L-glutamate binding site. Pyridoxal 5'-phosphate contacts are provided by Trp-101, Thr-152, Asp-172, and Gln-195. An N6-(pyridoxal phosphate)lysine modification is found at Lys-196. 237-238 (NT) lines the pyridoxal 5'-phosphate pocket.

The protein belongs to the class-V pyridoxal-phosphate-dependent aminotransferase family. SerC subfamily. In terms of assembly, homodimer. Pyridoxal 5'-phosphate is required as a cofactor.

The protein resides in the cytoplasm. The enzyme catalyses O-phospho-L-serine + 2-oxoglutarate = 3-phosphooxypyruvate + L-glutamate. The catalysed reaction is 4-(phosphooxy)-L-threonine + 2-oxoglutarate = (R)-3-hydroxy-2-oxo-4-phosphooxybutanoate + L-glutamate. Its pathway is amino-acid biosynthesis; L-serine biosynthesis; L-serine from 3-phospho-D-glycerate: step 2/3. It functions in the pathway cofactor biosynthesis; pyridoxine 5'-phosphate biosynthesis; pyridoxine 5'-phosphate from D-erythrose 4-phosphate: step 3/5. Catalyzes the reversible conversion of 3-phosphohydroxypyruvate to phosphoserine and of 3-hydroxy-2-oxo-4-phosphonooxybutanoate to phosphohydroxythreonine. This Burkholderia lata (strain ATCC 17760 / DSM 23089 / LMG 22485 / NCIMB 9086 / R18194 / 383) protein is Phosphoserine aminotransferase.